We begin with the raw amino-acid sequence, 456 residues long: Ribosomal protein uS12 methylthiotransferase RimO (456 aa).

Residues Pro11–Pro126 enclose the MTTase N-terminal domain. Positions 20, 56, 85, 157, 161, and 164 each coordinate [4Fe-4S] cluster. A Radical SAM core domain is found at Leu143–Arg384. Positions Gln387 to Ala456 constitute a TRAM domain.

This sequence belongs to the methylthiotransferase family. RimO subfamily. The cofactor is [4Fe-4S] cluster.

It localises to the cytoplasm. The enzyme catalyses L-aspartate(89)-[ribosomal protein uS12]-hydrogen + (sulfur carrier)-SH + AH2 + 2 S-adenosyl-L-methionine = 3-methylsulfanyl-L-aspartate(89)-[ribosomal protein uS12]-hydrogen + (sulfur carrier)-H + 5'-deoxyadenosine + L-methionine + A + S-adenosyl-L-homocysteine + 2 H(+). Its function is as follows. Catalyzes the methylthiolation of an aspartic acid residue of ribosomal protein uS12. This is Ribosomal protein uS12 methylthiotransferase RimO from Cupriavidus metallidurans (strain ATCC 43123 / DSM 2839 / NBRC 102507 / CH34) (Ralstonia metallidurans).